Consider the following 391-residue polypeptide: Chalcone synthase 2 (391 aa).

The active site involves cysteine 164.

It belongs to the thiolase-like superfamily. Chalcone/stilbene synthases family.

The enzyme catalyses (E)-4-coumaroyl-CoA + 3 malonyl-CoA + 3 H(+) = 2',4,4',6'-tetrahydroxychalcone + 3 CO2 + 4 CoA. It participates in secondary metabolite biosynthesis; flavonoid biosynthesis. Functionally, the primary product of this enzyme is 4,2',4',6'-tetrahydroxychalcone (also termed naringenin-chalcone or chalcone) which can under specific conditions spontaneously isomerize into naringenin. The sequence is that of Chalcone synthase 2 (CHS2) from Citrus sinensis (Sweet orange).